The primary structure comprises 216 residues: Octanoyltransferase (216 aa).

One can recognise a BPL/LPL catalytic domain in the interval 32–207 (SDSQDELWIV…TFSQIMGYQQ (176 aa)). Substrate contacts are provided by residues 71 to 78 (RGGQVTYH), 138 to 140 (SLG), and 151 to 153 (GLA). Catalysis depends on Cys-169, which acts as the Acyl-thioester intermediate.

It belongs to the LipB family.

It localises to the cytoplasm. The catalysed reaction is octanoyl-[ACP] + L-lysyl-[protein] = N(6)-octanoyl-L-lysyl-[protein] + holo-[ACP] + H(+). It functions in the pathway protein modification; protein lipoylation via endogenous pathway; protein N(6)-(lipoyl)lysine from octanoyl-[acyl-carrier-protein]: step 1/2. Its function is as follows. Catalyzes the transfer of endogenously produced octanoic acid from octanoyl-acyl-carrier-protein onto the lipoyl domains of lipoate-dependent enzymes. Lipoyl-ACP can also act as a substrate although octanoyl-ACP is likely to be the physiological substrate. This chain is Octanoyltransferase, found in Shewanella frigidimarina (strain NCIMB 400).